The primary structure comprises 188 residues: Holliday junction branch migration complex subunit RuvA (188 aa).

Residues 1–64 (MIAGISGRVL…QDGITLYGFS (64 aa)) are domain I. The interval 65 to 143 (NERKKELFLS…SAGIKDMRIY (79 aa)) is domain II. Position 143 (Y143) is a region of interest, flexible linker. The interval 143–188 (YHESLEALISLGYPEKQAREAVKHVYREGMKTSELIKEALKFLSQR) is domain III.

The protein belongs to the RuvA family. Homotetramer. Forms an RuvA(8)-RuvB(12)-Holliday junction (HJ) complex. HJ DNA is sandwiched between 2 RuvA tetramers; dsDNA enters through RuvA and exits via RuvB. An RuvB hexamer assembles on each DNA strand where it exits the tetramer. Each RuvB hexamer is contacted by two RuvA subunits (via domain III) on 2 adjacent RuvB subunits; this complex drives branch migration. In the full resolvosome a probable DNA-RuvA(4)-RuvB(12)-RuvC(2) complex forms which resolves the HJ.

It is found in the cytoplasm. The RuvA-RuvB-RuvC complex processes Holliday junction (HJ) DNA during genetic recombination and DNA repair, while the RuvA-RuvB complex plays an important role in the rescue of blocked DNA replication forks via replication fork reversal (RFR). RuvA specifically binds to HJ cruciform DNA, conferring on it an open structure. The RuvB hexamer acts as an ATP-dependent pump, pulling dsDNA into and through the RuvAB complex. HJ branch migration allows RuvC to scan DNA until it finds its consensus sequence, where it cleaves and resolves the cruciform DNA. In Thermotoga petrophila (strain ATCC BAA-488 / DSM 13995 / JCM 10881 / RKU-1), this protein is Holliday junction branch migration complex subunit RuvA.